A 155-amino-acid chain; its full sequence is uncharacterized protein (155 aa).

The signal sequence occupies residues 1–23 (MTILSLSRFMLAGVLLASFNASA).

To E.coli YfjT.

This is an uncharacterized protein from Escherichia coli (strain K12).